An 81-amino-acid polypeptide reads, in one-letter code: uncharacterized protein (81 aa).

The first 22 residues, 1–22 (MNKKLSIIFLIFALIASVLCSA), serve as a signal peptide directing secretion. A disordered region spans residues 29 to 81 (HSSSTTTTTSSSGGTSGTDSSINTGSSYSGSGSGSGSTGGSGSGSGSGTAKWK). Low complexity predominate over residues 30–58 (SSSTTTTTSSSGGTSGTDSSINTGSSYSG). The segment covering 59–75 (SGSGSGSTGGSGSGSGS) has biased composition (gly residues).

The protein resides in the secreted. This is an uncharacterized protein from Dictyostelium discoideum (Social amoeba).